The chain runs to 1241 residues: MTNPSDRVLPANSMAESREGDFGCTVMELRKLMELRSRDALTQINVHYGGVQNLCSRLKTSPVEGLSGNPADLEKRRQVFGHNVIPPKKPKTFLELVWEALQDVTLIILEIAAIISLVLSFYRPAGEENELCGQVATTPEDENEAQAGWIEGAAILFSVIIVVLVTAFNDWSKEKQFRGLQCRIEQEQKFSIIRNGQLIQLPVAEIVVGDIAQVKYGDLLPADGILIQGNDLKIDESSLTGESDHVKKSLDKDPMLLSGTHVMEGSGRMVVTAVGVNSQTGIILTLLGVNEDDEGEKKKKGKKQGVPENRNKAKTQDGVALEIQPLNSQEGIDNEEKDKKAVKVPKKEKSVLQGKLTRLAVQIGKAGLLMSALTVFILILYFVIDNFVINRRPWLPECTPIYIQYFVKFFIIGITVLVVAVPEGLPLAVTISLAYSVKKMMKDNNLVRHLDACETMGNATAICSDKTGTLTMNRMTVVQAYIGGIHYRQIPSPDVFLPKVLDLIVNGISINSAYTSKILPPEKEGGLPRQVGNKTECALLGFVTDLKQDYQAVRNEVPEEKLYKVYTFNSVRKSMSTVIRNPNGGFRMYSKGASEIILRKCNRILDRKGEAVPFKNKDRDDMVRTVIEPMACDGLRTICIAYRDFDDTEPSWDNENEILTELTCIAVVGIEDPVRPEVPDAIAKCKQAGITVRMVTGDNINTARAIATKCGILTPGDDFLCLEGKEFNRLIRNEKGEVEQEKLDKIWPKLRVLARSSPTDKHTLVKGIIDSTVGEHRQVVAVTGDGTNDGPALKKADVGFAMGIAGTDVAKEASDIILTDDNFTSIVKAVMWGRNVYDSISKFLQFQLTVNVVAVIVAFTGACITQDSPLKAVQMLWVNLIMDTFASLALATEPPTESLLKRRPYGRNKPLISRTMMKNILGHAFYQLIVIFILVFAGEKFFDIDSGRKAPLHSPPSQHYTIVFNTFVLMQLFNEINSRKIHGEKNVFSGIYRNIIFCSVVLGTFICQIFIVEFGGKPFSCTSLSLSQWLWCLFIGIGELLWGQFISAIPTRSLKFLKEAGHGTTKEEITKDAEGLDEIDHAEMELRRGQILWFRGLNRIQTQIDVINTFQTGASFKGVLRRQNMGQHLDVKLVPSSSYIKVVKAFHSSLHESIQKPYNQKSIHSFMTHPEFAIEEELPRTPLLDEEEEENPDKASKFGTRVLLLDGEVTPYANTNNNAVDCNQVQLPQSDSSLQSLETSV.

Over 1-92 the chain is Cytoplasmic; it reads MTNPSDRVLP…NVIPPKKPKT (92 aa). Phosphoserine is present on S13. The helical transmembrane segment at 93 to 113 threads the bilayer; that stretch reads FLELVWEALQDVTLIILEIAA. Topologically, residues 114-150 are extracellular; that stretch reads IISLVLSFYRPAGEENELCGQVATTPEDENEAQAGWI. A helical transmembrane segment spans residues 151–171; sequence EGAAILFSVIIVVLVTAFNDW. Over 172-356 the chain is Cytoplasmic; the sequence is SKEKQFRGLQ…KEKSVLQGKL (185 aa). Residues 294–318 form a disordered region; the sequence is EGEKKKKGKKQGVPENRNKAKTQDG. S328 is modified (phosphoserine). Residues 357 to 376 form a helical membrane-spanning segment; that stretch reads TRLAVQIGKAGLLMSALTVF. Residues 377-409 lie on the Extracellular side of the membrane; that stretch reads ILILYFVIDNFVINRRPWLPECTPIYIQYFVKF. A helical membrane pass occupies residues 410–427; the sequence is FIIGITVLVVAVPEGLPL. Topologically, residues 428–840 are cytoplasmic; that stretch reads AVTISLAYSV…MWGRNVYDSI (413 aa). Residue D465 is the 4-aspartylphosphate intermediate of the active site. The Mg(2+) site is built by D785 and D789. Residues 841 to 860 form a helical membrane-spanning segment; that stretch reads SKFLQFQLTVNVVAVIVAFT. Residues 861–870 are Extracellular-facing; it reads GACITQDSPL. The chain crosses the membrane as a helical span at residues 871–891; sequence KAVQMLWVNLIMDTFASLALA. At 892–911 the chain is on the cytoplasmic side; the sequence is TEPPTESLLKRRPYGRNKPL. Residues 912–934 form a helical membrane-spanning segment; the sequence is ISRTMMKNILGHAFYQLIVIFIL. Over 935-952 the chain is Extracellular; it reads VFAGEKFFDIDSGRKAPL. A helical transmembrane segment spans residues 953 to 974; that stretch reads HSPPSQHYTIVFNTFVLMQLFN. Residues 975-993 lie on the Cytoplasmic side of the membrane; that stretch reads EINSRKIHGEKNVFSGIYR. Residues 994 to 1015 traverse the membrane as a helical segment; sequence NIIFCSVVLGTFICQIFIVEFG. The Extracellular segment spans residues 1016 to 1025; that stretch reads GKPFSCTSLS. The helical transmembrane segment at 1026 to 1047 threads the bilayer; that stretch reads LSQWLWCLFIGIGELLWGQFIS. Residues 1048-1241 are Cytoplasmic-facing; sequence AIPTRSLKFL…SSLQSLETSV (194 aa). The segment at 1086–1103 is calmodulin-binding subdomain A; that stretch reads LRRGQILWFRGLNRIQTQ. T1102 carries the post-translational modification Phosphothreonine; by PKC. The tract at residues 1104 to 1113 is calmodulin-binding subdomain B; the sequence is IDVINTFQTG.

The protein belongs to the cation transport ATPase (P-type) (TC 3.A.3) family. Type IIB subfamily. In terms of assembly, interacts with PDZD11. Interacts with SLC35G1 and STIM1. Interacts with calmodulin. In terms of tissue distribution, isoform XB is the most abundant isoform and is expressed ubiquitously. Isoforms containing segment Z have only been detected in heart, while isoforms containing segment a have been found in heart, stomach and brain cortex.

The protein localises to the cell membrane. Its subcellular location is the cell projection. The protein resides in the cilium. It is found in the flagellum membrane. The catalysed reaction is Ca(2+)(in) + ATP + H2O = Ca(2+)(out) + ADP + phosphate + H(+). Activated by calcium/calmodulin. Its function is as follows. Calcium/calmodulin-regulated and magnesium-dependent enzyme that catalyzes the hydrolysis of ATP coupled with the transport of calcium out of the cell. By regulating sperm cell calcium homeostasis, may play a role in sperm motility. The sequence is that of Plasma membrane calcium-transporting ATPase 4 from Homo sapiens (Human).